Reading from the N-terminus, the 434-residue chain is MAIHSSSDALVYQSGFGNQFSSEALPDALPVGQNSPQKHPLGLYAEQFSGTAFTVARSEARRTWLYRIKPSAAHSRYQRMDRQMAGQEPGPINPNRLRWNAFDIPAAPTDFIDGLIPLASTSAAEQAEGVSVYLYTANTSMQRAFFSADGEWLVVPQQGRLRIVTELGLLDIEPLEIAVLPRGLKFCVQLLDSSARGYLCENHGCALRLPELGPIGSNGLANSRDFLTPVAWFEDSRQPMQLVQKFLGELWSTQLEHSPFDVVGWHGNNVPYKYDLRRFNTIGTVSYDHPDPSIFTVLTSPGAIHGQANIDFVIFPPRWMVAENTFRPPWFHRNLMNEFMGLIDGAYDAKAEGFMPGGASLHNCMSAHGPDNVTAEKAIAAELKPHRIDNTMAFMFETGKVLRPSRHALDCPQLQTDYDACWKDMARTFTQEPR.

His289 functions as the Proton acceptor in the catalytic mechanism. Residues His332 and Glu338 each contribute to the Fe cation site. 2 residues coordinate homogentisate: Tyr347 and His368. A Fe cation-binding site is contributed by His368.

Belongs to the homogentisate dioxygenase family. In terms of assembly, hexamer; dimer of trimers. The cofactor is Fe cation.

It catalyses the reaction homogentisate + O2 = 4-maleylacetoacetate + H(+). The protein operates within amino-acid degradation; L-phenylalanine degradation; acetoacetate and fumarate from L-phenylalanine: step 4/6. Functionally, involved in the catabolism of homogentisate (2,5-dihydroxyphenylacetate or 2,5-OH-PhAc), a central intermediate in the degradation of phenylalanine and tyrosine. Catalyzes the oxidative ring cleavage of the aromatic ring of homogentisate to yield maleylacetoacetate. This is Homogentisate 1,2-dioxygenase from Pseudomonas syringae pv. syringae (strain B728a).